The following is a 394-amino-acid chain: Elongation factor Tu (394 aa).

The 195-residue stretch at 10–204 (KPHINIGTIG…AVDDNIPTPE (195 aa)) folds into the tr-type G domain. The interval 19–26 (GHVDHGKT) is G1. Position 19–26 (19–26 (GHVDHGKT)) interacts with GTP. Thr-26 serves as a coordination point for Mg(2+). Residues 60–64 (GITIN) are G2. Residues 81–84 (DCPG) form a G3 region. GTP contacts are provided by residues 81 to 85 (DCPGH) and 136 to 139 (NKID). The G4 stretch occupies residues 136–139 (NKID). Residues 174-176 (SAL) are G5.

This sequence belongs to the TRAFAC class translation factor GTPase superfamily. Classic translation factor GTPase family. EF-Tu/EF-1A subfamily. As to quaternary structure, monomer.

The protein localises to the cytoplasm. It catalyses the reaction GTP + H2O = GDP + phosphate + H(+). In terms of biological role, GTP hydrolase that promotes the GTP-dependent binding of aminoacyl-tRNA to the A-site of ribosomes during protein biosynthesis. The chain is Elongation factor Tu from Chlamydia felis (strain Fe/C-56) (Chlamydophila felis).